Consider the following 200-residue polypeptide: Cytochrome c biogenesis ATP-binding export protein CcmA (200 aa).

In terms of domain architecture, ABC transporter spans 2-200 (LDVIELDFDY…NKADYEEYHL (199 aa)). Position 34–41 (34–41 (GSNGAGKT)) interacts with ATP.

The protein belongs to the ABC transporter superfamily. CcmA exporter (TC 3.A.1.107) family. In terms of assembly, the complex is composed of two ATP-binding proteins (CcmA) and two transmembrane proteins (CcmB).

It localises to the cell inner membrane. The catalysed reaction is heme b(in) + ATP + H2O = heme b(out) + ADP + phosphate + H(+). Functionally, part of the ABC transporter complex CcmAB involved in the biogenesis of c-type cytochromes; once thought to export heme, this seems not to be the case, but its exact role is uncertain. Responsible for energy coupling to the transport system. The polypeptide is Cytochrome c biogenesis ATP-binding export protein CcmA (Legionella pneumophila (strain Lens)).